We begin with the raw amino-acid sequence, 879 residues long: uncharacterized protein (879 aa).

Residues leucine 14–threonine 34 form a helical membrane-spanning segment.

The protein localises to the membrane. This is an uncharacterized protein from Mycoplasma pneumoniae (strain ATCC 29342 / M129 / Subtype 1) (Mycoplasmoides pneumoniae).